The following is a 345-amino-acid chain: Phosphoribosylformylglycinamidine cyclo-ligase (345 aa).

It belongs to the AIR synthase family.

It localises to the cytoplasm. The enzyme catalyses 2-formamido-N(1)-(5-O-phospho-beta-D-ribosyl)acetamidine + ATP = 5-amino-1-(5-phospho-beta-D-ribosyl)imidazole + ADP + phosphate + H(+). It functions in the pathway purine metabolism; IMP biosynthesis via de novo pathway; 5-amino-1-(5-phospho-D-ribosyl)imidazole from N(2)-formyl-N(1)-(5-phospho-D-ribosyl)glycinamide: step 2/2. This is Phosphoribosylformylglycinamidine cyclo-ligase from Salmonella choleraesuis (strain SC-B67).